A 150-amino-acid polypeptide reads, in one-letter code: Macrodomain Ter protein (150 aa).

This sequence belongs to the MatP family. Homodimer.

The protein localises to the cytoplasm. Functionally, required for spatial organization of the terminus region of the chromosome (Ter macrodomain) during the cell cycle. Prevents early segregation of duplicated Ter macrodomains during cell division. Binds specifically to matS, which is a 13 bp signature motif repeated within the Ter macrodomain. The protein is Macrodomain Ter protein of Escherichia coli O6:K15:H31 (strain 536 / UPEC).